Reading from the N-terminus, the 510-residue chain is Protein disulfide-isomerase (510 aa).

An N-terminal signal peptide occupies residues 1–20 (MLRRALLCLALTALFRAGAG). A Thioredoxin 1 domain is found at 27–136 (HVLVLHKGNF…IVNWLKKRTG (110 aa)). Residues cysteine 55 and cysteine 58 each act as nucleophile in the active site. Cysteine 55 and cysteine 58 are disulfide-bonded. Lysine 202 bears the N6-acetyllysine mark. An N6-succinyllysine mark is found at lysine 224 and lysine 273. Phosphoserine occurs at positions 333 and 359. One can recognise a Thioredoxin 2 domain in the interval 351–477 (GKIKPHLMSQ…FKKFLESGGQ (127 aa)). Residues cysteine 399 and cysteine 402 each act as nucleophile in the active site. Cysteine 399 and cysteine 402 are oxidised to a cystine. Serine 429 carries the phosphoserine modification. Residues 473 to 510 (ESGGQDGAGDDDDLEDLEEAEEPDLEEDDDQKAVKDEL) are disordered. Residues 480–502 (AGDDDDLEDLEEAEEPDLEEDDD) are compositionally biased toward acidic residues. The Prevents secretion from ER signature appears at 507 to 510 (KDEL).

The protein belongs to the protein disulfide isomerase family. Heterodimer; heterodimerizes with the protein microsomal triglyceride transfer MTTP. Homodimer. Monomers and homotetramers may also occur. Interacts with P4HA2, forming a heterotetramer consisting of 2 alpha subunits (P4HA2) and 2 beta (P4HB), where P4HB plays the role of a structural subunit; this tetramer catalyzes the formation of 4-hydroxyproline in collagen. Also constitutes the structural subunit of the microsomal triacylglycerol transfer protein MTTP in mammalian cells. Stabilizes both enzymes and retain them in the ER without contributing to the catalytic activity. Binds UBQLN1. Interacts with ERO1B. Interacts with ILDR2. Interacts with ERN1/IRE1A (via N-terminus); the interaction is enhanced by phosphorylation of P4HB by FAM20C in response to endoplasmic reticulum stress and results in attenuation of ERN1 activity. In terms of processing, phosphorylation of Ser-359 by FAM20C is induced by endoplasmic reticulum stress and results in a functional switch from oxidoreductase to molecular chaperone. It also promotes interaction with ERN1.

It localises to the endoplasmic reticulum. It is found in the endoplasmic reticulum lumen. The protein localises to the melanosome. Its subcellular location is the cell membrane. It carries out the reaction Catalyzes the rearrangement of -S-S- bonds in proteins.. Its function is as follows. This multifunctional protein catalyzes the formation, breakage and rearrangement of disulfide bonds. At the cell surface, seems to act as a reductase that cleaves disulfide bonds of proteins attached to the cell. May therefore cause structural modifications of exofacial proteins. Inside the cell, seems to form/rearrange disulfide bonds of nascent proteins. At high concentrations and following phosphorylation by FAM20C, functions as a chaperone that inhibits aggregation of misfolded proteins. At low concentrations, facilitates aggregation (anti-chaperone activity). May be involved with other chaperones in the structural modification of the TG precursor in hormone biogenesis. Also acts as a structural subunit of various enzymes such as prolyl 4-hydroxylase and microsomal triacylglycerol transfer protein MTTP. Receptor for LGALS9; the interaction retains P4HB at the cell surface of Th2 T helper cells, increasing disulfide reductase activity at the plasma membrane, altering the plasma membrane redox state and enhancing cell migration. This is Protein disulfide-isomerase (P4HB) from Bos taurus (Bovine).